A 59-amino-acid polypeptide reads, in one-letter code: UPF0391 membrane protein AZC_4184 (59 aa).

2 helical membrane passes run 4 to 24 (WALT…TAVA) and 30 to 50 (IAKI…VMGF).

This sequence belongs to the UPF0391 family.

It localises to the cell membrane. This is UPF0391 membrane protein AZC_4184 from Azorhizobium caulinodans (strain ATCC 43989 / DSM 5975 / JCM 20966 / LMG 6465 / NBRC 14845 / NCIMB 13405 / ORS 571).